Consider the following 128-residue polypeptide: Ribonuclease pancreatic (128 aa).

The tract at residues 1–23 is disordered; the sequence is AESSAMKFQRQHVDSEGSSSSNA. Positions 7 and 10 each coordinate substrate. Residue His12 is the Proton acceptor of the active site. Cystine bridges form between Cys26–Cys84, Cys40–Cys95, Cys58–Cys110, and Cys65–Cys72. Substrate contacts are provided by residues 41 to 45, Lys66, and Arg85; that span reads KPVNT. His119 (proton donor) is an active-site residue.

The protein belongs to the pancreatic ribonuclease family. In terms of assembly, monomer. Interacts with and forms tight 1:1 complexes with RNH1. Dimerization of two such complexes may occur. Interaction with RNH1 inhibits this protein. In terms of tissue distribution, pancreas.

It localises to the secreted. It carries out the reaction an [RNA] containing cytidine + H2O = an [RNA]-3'-cytidine-3'-phosphate + a 5'-hydroxy-ribonucleotide-3'-[RNA].. The catalysed reaction is an [RNA] containing uridine + H2O = an [RNA]-3'-uridine-3'-phosphate + a 5'-hydroxy-ribonucleotide-3'-[RNA].. Endonuclease that catalyzes the cleavage of RNA on the 3' side of pyrimidine nucleotides. Acts on single-stranded and double-stranded RNA. The chain is Ribonuclease pancreatic (RNASE1) from Hydrochoerus hydrochaeris (Capybara).